The primary structure comprises 170 residues: S-ribosylhomocysteine lyase (170 aa).

The Fe cation site is built by His54, His58, and Cys128.

The protein belongs to the LuxS family. As to quaternary structure, homodimer. It depends on Fe cation as a cofactor.

It carries out the reaction S-(5-deoxy-D-ribos-5-yl)-L-homocysteine = (S)-4,5-dihydroxypentane-2,3-dione + L-homocysteine. Involved in the synthesis of autoinducer 2 (AI-2) which is secreted by bacteria and is used to communicate both the cell density and the metabolic potential of the environment. The regulation of gene expression in response to changes in cell density is called quorum sensing. Catalyzes the transformation of S-ribosylhomocysteine (RHC) to homocysteine (HC) and 4,5-dihydroxy-2,3-pentadione (DPD). The protein is S-ribosylhomocysteine lyase of Marinomonas sp. (strain MWYL1).